Here is a 30-residue protein sequence, read N- to C-terminus: Trypsin inhibitor 3 (30 aa).

Disulfide bonds link Cys4–Cys21, Cys11–Cys23, and Cys17–Cys29.

The protein belongs to the protease inhibitor I7 (squash-type serine protease inhibitor) family.

Its subcellular location is the secreted. Inhibits lysyl endopeptidase and trypsin. The protein is Trypsin inhibitor 3 of Cucumis melo var. conomon (Oriental pickling melon).